Here is a 138-residue protein sequence, read N- to C-terminus: MRVTQGTFSFLPDLTNDQIRKQIQYAINKGWALSVEYTDDPHPRNSYWEMWGLPLFDVKDPAAIMFEVEACRKEKSNYYIKLLAFDSTKGVESTAMSFMVNRPAHEPGFVLRRIESNDRVQRYQIHSYATEKPEGERY.

This sequence belongs to the RuBisCO small chain family. In terms of assembly, heterohexadecamer of 8 large and 8 small subunits.

Its subcellular location is the plastid. The protein resides in the chloroplast. RuBisCO catalyzes two reactions: the carboxylation of D-ribulose 1,5-bisphosphate, the primary event in carbon dioxide fixation, as well as the oxidative fragmentation of the pentose substrate in the photorespiration process. Both reactions occur simultaneously and in competition at the same active site. Although the small subunit is not catalytic it is essential for maximal activity. In Cyanidium caldarium (Red alga), this protein is Ribulose bisphosphate carboxylase small subunit.